The primary structure comprises 309 residues: uncharacterized protein (309 aa).

Residues 23 to 43 (ALVLSSIVNILLLLLIYSTVF) form a helical membrane-spanning segment.

It belongs to the chlamydial CPn_0593/CT_474/TC_0759 family.

The protein resides in the membrane. This is an uncharacterized protein from Chlamydia trachomatis serovar D (strain ATCC VR-885 / DSM 19411 / UW-3/Cx).